Reading from the N-terminus, the 283-residue chain is tRNA pseudouridine synthase A (283 aa).

Residue Asp73 is the Nucleophile of the active site. Residues 120-124 form an RNA binding region; that stretch reads FHARF. Substrate is bound at residue Tyr131. The tract at residues 181–185 is interaction with tRNA; the sequence is QCQSR.

Belongs to the tRNA pseudouridine synthase TruA family. In terms of assembly, homodimer.

It catalyses the reaction uridine(38/39/40) in tRNA = pseudouridine(38/39/40) in tRNA. Formation of pseudouridine at positions 38, 39 and 40 in the anticodon stem and loop of transfer RNAs. The protein is tRNA pseudouridine synthase A of Pectobacterium atrosepticum (strain SCRI 1043 / ATCC BAA-672) (Erwinia carotovora subsp. atroseptica).